The chain runs to 244 residues: 5-oxoprolinase subunit A (244 aa).

The protein belongs to the LamB/PxpA family. As to quaternary structure, forms a complex composed of PxpA, PxpB and PxpC.

The enzyme catalyses 5-oxo-L-proline + ATP + 2 H2O = L-glutamate + ADP + phosphate + H(+). Functionally, catalyzes the cleavage of 5-oxoproline to form L-glutamate coupled to the hydrolysis of ATP to ADP and inorganic phosphate. The polypeptide is 5-oxoprolinase subunit A (Salmonella choleraesuis (strain SC-B67)).